The following is a 343-amino-acid chain: Putative ALA-interacting subunit 2 (343 aa).

A helical transmembrane segment spans residues 43–63 (PISVITVFMLMGFVFIPIGLI). N-linked (GlcNAc...) asparagine glycosylation is found at Asn103, Asn178, Asn191, and Asn218. A helical membrane pass occupies residues 301-321 (FLGITYLVVGSSSIVISIIFM).

This sequence belongs to the CDC50/LEM3 family. Expressed in roots, leaves, stems, flowers and siliques.

It localises to the membrane. The polypeptide is Putative ALA-interacting subunit 2 (ALIS2) (Arabidopsis thaliana (Mouse-ear cress)).